The sequence spans 131 residues: Holo-[acyl-carrier-protein] synthase (131 aa).

The Mg(2+) site is built by Asp-8 and Glu-59.

It belongs to the P-Pant transferase superfamily. AcpS family. Mg(2+) is required as a cofactor.

It is found in the cytoplasm. It carries out the reaction apo-[ACP] + CoA = holo-[ACP] + adenosine 3',5'-bisphosphate + H(+). Functionally, transfers the 4'-phosphopantetheine moiety from coenzyme A to a Ser of acyl-carrier-protein. The chain is Holo-[acyl-carrier-protein] synthase from Rickettsia rickettsii (strain Iowa).